We begin with the raw amino-acid sequence, 632 residues long: PTS system mannitol-specific EIICBA component (632 aa).

Residues F12–I341 form the PTS EIIC type-2 domain. 6 consecutive transmembrane segments (helical) span residues I24–N45, Q50–S70, S134–E155, I165–K185, L273–I292, and F313–L334. Positions K374–Y469 constitute a PTS EIIB type-2 domain. Catalysis depends on C380, which acts as the Phosphocysteine intermediate; for EIIB activity. The residue at position 380 (C380) is a Phosphocysteine; by EIIA. Residues F488–E630 enclose the PTS EIIA type-2 domain. Residue H548 is the Tele-phosphohistidine intermediate; for EIIA activity of the active site. H548 is subject to Phosphohistidine; by HPr.

Homodimer. Post-translationally, an intramolecular phosphotransfer takes places between His-548 and Cys-380.

It localises to the cell inner membrane. It catalyses the reaction D-mannitol(out) + N(pros)-phospho-L-histidyl-[protein] = D-mannitol 1-phosphate(in) + L-histidyl-[protein]. In terms of biological role, the phosphoenolpyruvate-dependent sugar phosphotransferase system (sugar PTS), a major carbohydrate active transport system, catalyzes the phosphorylation of incoming sugar substrates concomitantly with their translocation across the cell membrane. This system is involved in D-mannitol transport. The protein is PTS system mannitol-specific EIICBA component (mtlA) of Buchnera aphidicola subsp. Acyrthosiphon pisum (strain APS) (Acyrthosiphon pisum symbiotic bacterium).